Reading from the N-terminus, the 336-residue chain is Glyceraldehyde-3-phosphate dehydrogenase 1 (336 aa).

NAD(+)-binding positions include 12-13 (RI), Asp34, and Arg79. D-glyceraldehyde 3-phosphate contacts are provided by residues 149–151 (SCT), Thr180, 209–210 (TG), and Arg232. Cys150 (nucleophile) is an active-site residue. Asn314 contributes to the NAD(+) binding site.

This sequence belongs to the glyceraldehyde-3-phosphate dehydrogenase family. Homotetramer.

The protein localises to the cytoplasm. The enzyme catalyses D-glyceraldehyde 3-phosphate + phosphate + NAD(+) = (2R)-3-phospho-glyceroyl phosphate + NADH + H(+). It functions in the pathway carbohydrate degradation; glycolysis; pyruvate from D-glyceraldehyde 3-phosphate: step 1/5. Inhibited by koningic acid through the interaction of cysteine residues with koningic acid even at very low concentrations. This is Glyceraldehyde-3-phosphate dehydrogenase 1 (gpd1) from Trichoderma koningii (Hypocrea koningii).